Here is a 225-residue protein sequence, read N- to C-terminus: 3-dehydroquinate dehydratase (225 aa).

3-dehydroquinate contacts are provided by residues Ser6, 30–32 (EWR), and Arg62. Catalysis depends on His118, which acts as the Proton donor/acceptor. The active-site Schiff-base intermediate with substrate is the Lys143. 3-dehydroquinate-binding residues include Arg186, Ser205, and Gln209.

It belongs to the type-I 3-dehydroquinase family. In terms of assembly, homodimer.

It carries out the reaction 3-dehydroquinate = 3-dehydroshikimate + H2O. The protein operates within metabolic intermediate biosynthesis; chorismate biosynthesis; chorismate from D-erythrose 4-phosphate and phosphoenolpyruvate: step 3/7. In terms of biological role, involved in the third step of the chorismate pathway, which leads to the biosynthesis of aromatic amino acids. Catalyzes the cis-dehydration of 3-dehydroquinate (DHQ) and introduces the first double bond of the aromatic ring to yield 3-dehydroshikimate. The chain is 3-dehydroquinate dehydratase from Streptococcus pneumoniae (strain P1031).